The sequence spans 298 residues: NADH-cytochrome b5 reductase 2 (298 aa).

The chain crosses the membrane as a helical span at residues 13–33 (FLPFAIGAVAVTAGALYLNGW). The 105-residue stretch at 48–152 (RKWIDLELEK…QGPIPKWQWK (105 aa)) folds into the FAD-binding FR-type domain. 155 to 190 (SFDTITLLGGGTGITPLYQLVHHITQNKEDKTKINL) contributes to the FAD binding site.

The protein belongs to the flavoprotein pyridine nucleotide cytochrome reductase family. The cofactor is FAD.

It is found in the mitochondrion outer membrane. The catalysed reaction is 2 Fe(III)-[cytochrome b5] + NADH = 2 Fe(II)-[cytochrome b5] + NAD(+) + H(+). In terms of biological role, may mediate the reduction of outer membrane cytochrome b5. In Candida glabrata (strain ATCC 2001 / BCRC 20586 / JCM 3761 / NBRC 0622 / NRRL Y-65 / CBS 138) (Yeast), this protein is NADH-cytochrome b5 reductase 2 (MCR1).